A 751-amino-acid chain; its full sequence is MSAEVSTTPAADNTVNGTPEATNPAATSAPEVTAVESASPSATPSANQPHSASLYVGELDPSVTEAMLYELFSSIGQVASIRVCRDAVTRRSLGYAYVNYNNTADGERALEDLNYTLIKGKPCRIMWSQRDPALRKTGQGNVFIKNLDAAIDNKALHDTFAAFGNILSCKVAQDEFGNSKGYGFVHYETAEAANNAIKHVNGMLLNDKKVFVGHHISKKDRQSKFEEMKANFTNVYIKNIDQEVTDEEFRKMFEKFGEITSATLSRDQEGKSRGFGFVNFSTHDSAQAAVDEMNDKEIKGQKLYVGRAQKKHEREEELRKQYEAARLEKASKYQGVNLYVKNLTDDVDDEKLRELFSPFGTITSAKVMRDTVTAGETSESEKEKESNKENEKEGEEKTEEKPKESEEEAKKTEKKILGKSKGFGFVCFSSPDEASKAVTEMNQRMVNGKPLYVALAQRKDVRRSQLEASIQARNTIRQQQAAAAAGMPQPYMQPAVFYGPGQQGFIPAGQRGGMPFAPQPGMVMGIPGGRPGQYPGPFPGQQGGRGMGPNQQIPPNFQGIPMGAMQGPGGIPNGMGYPQMAQVQFGRGAGGRGQVPGMPMGQGMRGPGYGQGRGGAPVQGGPRPQGGRGQPAAAPPAAGREEVPATGGLTAQTLNAVPPPQQKQMLGEALYPKIQAQQPELAGKITGMLLEMDNTELLGLLEDEEALRAKVDEALSVYDEYMKNKGEGEAPAEPAKPKEDAAETATEENKS.

Polar residues-rich tracts occupy residues 1 to 26 and 36 to 50; these read MSAEVSTTPAADNTVNGTPEATNPAA and ESASPSATPSANQPH. The tract at residues 1–50 is disordered; it reads MSAEVSTTPAADNTVNGTPEATNPAATSAPEVTAVESASPSATPSANQPH. 4 RRM domains span residues 52-130, 140-217, 233-310, and 336-458; these read ASLY…WSQR, GNVF…HHIS, TNVY…RAQK, and VNLY…LAQR. 2 disordered regions span residues 371-413 and 601-643; these read TVTA…KKTE and GQGM…REEV. Positions 379–413 are enriched in basic and acidic residues; that stretch reads ESEKEKESNKENEKEGEEKTEEKPKESEEEAKKTE. Over residues 603 to 629 the composition is skewed to gly residues; sequence GMRGPGYGQGRGGAPVQGGPRPQGGRG. Residues 646–723 enclose the PABC domain; that stretch reads TGGLTAQTLN…ALSVYDEYMK (78 aa). The segment at 725-751 is disordered; the sequence is KGEGEAPAEPAKPKEDAAETATEENKS. The segment covering 735–751 has biased composition (basic and acidic residues); it reads AKPKEDAAETATEENKS.

It belongs to the polyadenylate-binding protein type-1 family.

It localises to the cytoplasm. The protein localises to the nucleus. Functionally, binds the poly(A) tail of mRNA. Appears to be an important mediator of the multiple roles of the poly(A) tail in mRNA biogenesis, stability and translation. In the nucleus, involved in both mRNA cleavage and polyadenylation. Is also required for efficient mRNA export to the cytoplasm. Acts in concert with a poly(A)-specific nuclease (PAN) to affect poly(A) tail shortening, which may occur concomitantly with either nucleocytoplasmic mRNA transport or translational initiation. In the cytoplasm, stimulates translation initiation and regulates mRNA decay through translation termination-coupled poly(A) shortening, probably mediated by PAN. The chain is Polyadenylate-binding protein, cytoplasmic and nuclear (pab1) from Neosartorya fischeri (strain ATCC 1020 / DSM 3700 / CBS 544.65 / FGSC A1164 / JCM 1740 / NRRL 181 / WB 181) (Aspergillus fischerianus).